A 170-amino-acid chain; its full sequence is Co-chaperone protein HscB homolog (170 aa).

In terms of domain architecture, J spans 5-79 (DHFSLFGLPT…RARYLCEQAG (75 aa)).

The protein belongs to the HscB family. As to quaternary structure, interacts with HscA and stimulates its ATPase activity.

Its function is as follows. Co-chaperone involved in the maturation of iron-sulfur cluster-containing proteins. Seems to help targeting proteins to be folded toward HscA. The protein is Co-chaperone protein HscB homolog of Bordetella bronchiseptica (strain ATCC BAA-588 / NCTC 13252 / RB50) (Alcaligenes bronchisepticus).